Here is a 725-residue protein sequence, read N- to C-terminus: NAD(+) hydrolase SARM1 (725 aa).

Residues 1–27 (MVLTILFSAYKLCRFFAMSSPRPGAER) constitute a mitochondrion transit peptide. The stretch at 60–100 (EVQGALERALPELQQALSALKQAGGGRAVGAGLAEVFQLVE) is one ARM 1 repeat. NAD(+)-binding positions include tryptophan 103, arginine 110, 149 to 158 (EQILVAENRR), and 191 to 194 (HMFK). ARM repeat units lie at residues 114–153 (QGLC…QILV), 155–194 (ENRR…HMFK), 197–236 (EETC…NCAM), 238–281 (GGQA…LATN), 282–315 (KEVE…CLVD), 316–355 (ASDT…AEAV), and 360–403 (KNRN…EEVP). 2 SAM domains span residues 413–477 (WKEA…LKTF) and 483–549 (CDRS…MLHS). Phosphoserine is present on residues serine 549 and serine 559. Positions 561–704 (DVPDVFISYR…KIIRFLQGRS (144 aa)) constitute a TIR domain. NAD(+)-binding positions include 570–571 (RR) and glutamate 600. The active site involves glutamate 643. Positions 705–725 (SRDSSAGSDTSLEGAAPMGPT) are disordered.

Belongs to the SARM1 family. In terms of assembly, homooctamer; forms an octameric ring via SAM domains. Interacts with TICAM1/TRIF and thereby interferes with TICAM1/TRIF function. Interacts with MAPK10/JNK3 and SDC2 (via cytoplasmic domain). Phosphorylation at Ser-549 by JNK kinases (MAPK8, MAPK9 and /or MAPK10) enhance the NAD(+) hydrolase (NADase) activity. Phosphorylation at Ser-549 and subsequent activation takes place in response to oxidative stress conditions and inhibits mitochondrial respiration. In terms of tissue distribution, highest expression seen in the spleen and the brain, followed by lung, kidney, liver and other tissues.

It localises to the cytoplasm. Its subcellular location is the cell projection. The protein localises to the axon. It is found in the dendrite. The protein resides in the synapse. It localises to the mitochondrion. It carries out the reaction NAD(+) + H2O = ADP-D-ribose + nicotinamide + H(+). The catalysed reaction is NAD(+) = cyclic ADP-beta-D-ribose + nicotinamide + H(+). The enzyme catalyses NADP(+) + H2O = ADP-D-ribose 2'-phosphate + nicotinamide + H(+). With respect to regulation, autoinhibited: in the inactive state, the enzymatic TIR domain is held apart by the autoinhibiting ARM repeats. NAD(+)-binding to ARM repeats maintains an inactive state by promoting interaction between ARM repeats and the TIR domain, thereby facilitating inhibition of the enzymatic TIR domain. Following activation, possibly by nicotinamide mononucleotide (NMN), auto-inhibitory interactions are released, allowing self-association of the TIR domains and subsequent activation of the NAD(+) hydrolase (NADase) activity. Self-association of TIR domains is facilitated by the octamer of SAM domains. Functionally, NAD(+) hydrolase, which plays a key role in axonal degeneration following injury by regulating NAD(+) metabolism. Acts as a negative regulator of MYD88- and TRIF-dependent toll-like receptor signaling pathway by promoting Wallerian degeneration, an injury-induced form of programmed subcellular death which involves degeneration of an axon distal to the injury site. Wallerian degeneration is triggered by NAD(+) depletion: in response to injury, SARM1 is activated and catalyzes cleavage of NAD(+) into ADP-D-ribose (ADPR), cyclic ADPR (cADPR) and nicotinamide; NAD(+) cleavage promoting cytoskeletal degradation and axon destruction. Also able to hydrolyze NADP(+), but not other NAD(+)-related molecules. Can activate neuronal cell death in response to stress. Regulates dendritic arborization through the MAPK4-JNK pathway. Involved in innate immune response: inhibits both TICAM1/TRIF- and MYD88-dependent activation of JUN/AP-1, TRIF-dependent activation of NF-kappa-B and IRF3, and the phosphorylation of MAPK14/p38. The sequence is that of NAD(+) hydrolase SARM1 from Sus scrofa (Pig).